Reading from the N-terminus, the 527-residue chain is Peptide chain release factor 3 (527 aa).

Positions 9-277 (AKRRTFAIIS…CIVDWAPQPL (269 aa)) constitute a tr-type G domain. Residues 18-25 (SHPDAGKT), 86-90 (DTPGH), and 140-143 (NKLD) contribute to the GTP site.

Belongs to the TRAFAC class translation factor GTPase superfamily. Classic translation factor GTPase family. PrfC subfamily.

The protein localises to the cytoplasm. Increases the formation of ribosomal termination complexes and stimulates activities of RF-1 and RF-2. It binds guanine nucleotides and has strong preference for UGA stop codons. It may interact directly with the ribosome. The stimulation of RF-1 and RF-2 is significantly reduced by GTP and GDP, but not by GMP. In Pseudomonas aeruginosa (strain LESB58), this protein is Peptide chain release factor 3.